Here is a 290-residue protein sequence, read N- to C-terminus: MILMQPLSSLSKVGVILRPSSPSLKEFFLQVRSLFEREGIEVMLDSISGGMIGIYGCDFQRLCSESDMLVSIGGDGTLISVVRRSYPYGKPILGINMGRLGFLTDVRQDEVEAFVQKLKAGEYRIDSRLMLEGELSSPKGTQRFFAFNEAIVTRRPISGMIHVKASIGEEPFNTYFGDGLIVATPTGSTAYNISAGGPVVYPYSKNMILTPICAHSLTQRPLVLPSEFEVELEMLEGEFANIVVDGQEIMDFGYGDRLRLKVAERPALLVHKKEHNYFQVLREKFSWGDA.

Asp75 serves as the catalytic Proton acceptor. Residues 75–76, 148–149, Asp178, 189–194, and Gln247 contribute to the NAD(+) site; these read DG, NE, and TAYNIS.

It belongs to the NAD kinase family. A divalent metal cation is required as a cofactor.

The protein resides in the cytoplasm. It catalyses the reaction NAD(+) + ATP = ADP + NADP(+) + H(+). In terms of biological role, involved in the regulation of the intracellular balance of NAD and NADP, and is a key enzyme in the biosynthesis of NADP. Catalyzes specifically the phosphorylation on 2'-hydroxyl of the adenosine moiety of NAD to yield NADP. The polypeptide is NAD kinase (Wolinella succinogenes (strain ATCC 29543 / DSM 1740 / CCUG 13145 / JCM 31913 / LMG 7466 / NCTC 11488 / FDC 602W) (Vibrio succinogenes)).